The following is a 642-amino-acid chain: MGKIIGIDLGTTNSCVAVMQGTKPTVIENSEGYRTTPSMVAFTKNGERLVGHAAKRQAITNAENTIFSIKRFMGRKFDEISNEKKIAPYKVTNVNGEARVEIGDKTYSPQEISAMILQKMKQTAEDFLGEKVTEAVITVPAYFNDAQRQATKDAGKIAGLEVKRIINEPTAASLSYGLDTKNENEKVAVFDLGGGTFDISILELGDGVFEVKSTDGDTHLGGDDFDQKIIDFLADEFKKQEGIDLRNDMMALQRLKEAAEKAKVELSSRTDTEINLPFITATQEGPKHLVVNLTRSKFEALCSDLFDSLIAPCKRAIKNSKLKTSEINEVVLVGGSTRIPKVQALVEELFGREPNRSVNPDEVVAVGAAIQGGVLSGDVSDVLLLDVTPLSLGIETLGGVMTKLIEANTTIPSKKQEVFSTAADNQTSVEVHVLQGERPMASDNKTLGRFHLGDIPPAPRGVPQIEVAFDIDSNGILHVSAKDKATGKEQSIRIEASGKLNDAEIEKMKEDAKTHAAEDEKRKEAIDLKNSADALIFSTEKQLGELGDKVPADKKTQLEEALEKLKEAHKSENVETIKPAMDELNTIWNDVASTMYQTPSGDTPPSEPETGASEESKGGDKTQGDGEVDAEYEVIDGNDKDK.

Thr-196 carries the post-translational modification Phosphothreonine; by autocatalysis. Polar residues predominate over residues 593 to 603; it reads STMYQTPSGDT. The disordered stretch occupies residues 593-642; it reads STMYQTPSGDTPPSEPETGASEESKGGDKTQGDGEVDAEYEVIDGNDKDK. The segment covering 614-624 has biased composition (basic and acidic residues); that stretch reads EESKGGDKTQG. The segment covering 626–636 has biased composition (acidic residues); the sequence is GEVDAEYEVID.

The protein belongs to the heat shock protein 70 family.

Functionally, acts as a chaperone. This Chlorobium phaeobacteroides (strain BS1) protein is Chaperone protein DnaK.